The sequence spans 206 residues: Small ribosomal subunit protein uS4 (206 aa).

The 63-residue stretch at serine 96–alanine 158 folds into the S4 RNA-binding domain.

This sequence belongs to the universal ribosomal protein uS4 family. In terms of assembly, part of the 30S ribosomal subunit. Contacts protein S5. The interaction surface between S4 and S5 is involved in control of translational fidelity.

In terms of biological role, one of the primary rRNA binding proteins, it binds directly to 16S rRNA where it nucleates assembly of the body of the 30S subunit. With S5 and S12 plays an important role in translational accuracy. The chain is Small ribosomal subunit protein uS4 from Francisella tularensis subsp. tularensis (strain FSC 198).